The primary structure comprises 434 residues: D-amino acid dehydrogenase (434 aa).

3–17 contributes to the FAD binding site; that stretch reads VVILGSGVVGVTSAW.

Belongs to the DadA oxidoreductase family. FAD serves as cofactor.

The enzyme catalyses a D-alpha-amino acid + A + H2O = a 2-oxocarboxylate + AH2 + NH4(+). It participates in amino-acid degradation; D-alanine degradation; NH(3) and pyruvate from D-alanine: step 1/1. In terms of biological role, oxidative deamination of D-amino acids. The sequence is that of D-amino acid dehydrogenase from Yersinia pseudotuberculosis serotype O:1b (strain IP 31758).